We begin with the raw amino-acid sequence, 81 residues long: Protein PYP1 (81 aa).

The transit peptide at 1-25 directs the protein to the chloroplast; the sequence is MAFVSGFTGMPVTARVSKAVCRTRM. Residues 27–57 are disordered; it reads LEGGKSSGGGEATRDPEPTAVDPNDPKGKQQ.

The protein resides in the plastid. Its subcellular location is the chloroplast. The sequence is that of Protein PYP1 from Pyropia yezoensis (Susabi-nori).